The following is a 793-amino-acid chain: Lon protease 1 (793 aa).

In terms of domain architecture, Lon N-terminal spans 8–202 (VPVIPLKNSV…KLLDRLQELK (195 aa)). ATP is bound at residue 354 to 361 (GPPGVGKT). In terms of domain architecture, Lon proteolytic spans 590 to 770 (LLPPGVVTGL…NEVLKITLGV (181 aa)). Active-site residues include S676 and K719.

The protein belongs to the peptidase S16 family. In terms of assembly, homohexamer. Organized in a ring with a central cavity.

The protein localises to the cytoplasm. It catalyses the reaction Hydrolysis of proteins in presence of ATP.. ATP-dependent serine protease that mediates the selective degradation of mutant and abnormal proteins as well as certain short-lived regulatory proteins. Required for cellular homeostasis and for survival from DNA damage and developmental changes induced by stress. Degrades polypeptides processively to yield small peptide fragments that are 5 to 10 amino acids long. Binds to DNA in a double-stranded, site-specific manner. This chain is Lon protease 1, found in Bdellovibrio bacteriovorus (strain ATCC 15356 / DSM 50701 / NCIMB 9529 / HD100).